The sequence spans 176 residues: Small ribosomal subunit protein uS5 (176 aa).

The S5 DRBM domain occupies 11-74 (LSEVLVDVNR…QAAKKRMMKV (64 aa)).

It belongs to the universal ribosomal protein uS5 family. As to quaternary structure, part of the 30S ribosomal subunit. Contacts proteins S4 and S8.

With S4 and S12 plays an important role in translational accuracy. In terms of biological role, located at the back of the 30S subunit body where it stabilizes the conformation of the head with respect to the body. The polypeptide is Small ribosomal subunit protein uS5 (Rickettsia akari (strain Hartford)).